Reading from the N-terminus, the 611-residue chain is Zinc metalloproteinase-disintegrin-like ohanin (611 aa).

Residues 1–20 form the signal peptide; sequence MIQVLLVTICLVVFPYQGSS. The propeptide occupies 21–187; that stretch reads IILESGKVND…WESDEPIEKI (167 aa). Residues 198 to 393 enclose the Peptidase M12B domain; it reads KYLELYIVAD…DTPQCLINKP (196 aa). 2 N-linked (GlcNAc...) asparagine glycosylation sites follow: asparagine 217 and asparagine 260. Cystine bridges form between cysteine 307-cysteine 388, cysteine 347-cysteine 372, and cysteine 349-cysteine 354. Zn(2+) is bound at residue histidine 332. Glutamate 333 is an active-site residue. Residues histidine 336 and histidine 342 each coordinate Zn(2+). Asparagine 395 is a glycosylation site (N-linked (GlcNAc...) asparagine). The 87-residue stretch at 401–487 folds into the Disintegrin domain; it reads NAVCGNYVEE…ECPMDRFHKN (87 aa). Cystine bridges form between cysteine 404–cysteine 433, cysteine 415–cysteine 428, cysteine 417–cysteine 423, cysteine 427–cysteine 450, cysteine 441–cysteine 447, cysteine 446–cysteine 472, cysteine 459–cysteine 479, cysteine 466–cysteine 498, cysteine 491–cysteine 503, cysteine 510–cysteine 560, cysteine 525–cysteine 578, cysteine 538–cysteine 548, cysteine 555–cysteine 603, and cysteine 597–cysteine 608. The D/ECD-tripeptide signature appears at 465-467; sequence ECD. N-linked (GlcNAc...) asparagine glycosylation occurs at asparagine 528.

The protein belongs to the venom metalloproteinase (M12B) family. P-III subfamily. P-IIIa sub-subfamily. Monomer. The cofactor is Zn(2+). As to expression, expressed by the venom gland.

It is found in the secreted. Inhibited by EDTA, but not by PMSF. In terms of biological role, snake venom zinc metalloproteinase that has hemorrhagic activity. Inhibits ADP-, TMVA- and stejnulxin-induced platelet aggregation in a dose-dependent manner (on washed platelet, but not on platelet rich plasm). Also specifically degrades alpha-chain of fibrinogen (FGA). This is Zinc metalloproteinase-disintegrin-like ohanin from Ophiophagus hannah (King cobra).